The chain runs to 331 residues: D-lactate dehydrogenase (331 aa).

NAD(+) contacts are provided by residues 156–157, aspartate 176, 206–207, 233–235, and aspartate 259; these read RI, MP, and TAR. Arginine 235 is an active-site residue. Glutamate 264 is a catalytic residue. Catalysis depends on histidine 296, which acts as the Proton donor.

Belongs to the D-isomer specific 2-hydroxyacid dehydrogenase family.

It catalyses the reaction (R)-lactate + NAD(+) = pyruvate + NADH + H(+). The chain is D-lactate dehydrogenase (ldhD) from Treponema pallidum (strain Nichols).